A 118-amino-acid chain; its full sequence is DNA-binding protein Msp_0595 (118 aa).

Residues 15–44 are compositionally biased toward low complexity; it reads LKQQQLAAQQQQGASLEQMQQEEQARQQFE. Residues 15–45 are disordered; that stretch reads LKQQQLAAQQQQGASLEQMQQEEQARQQFEN.

This sequence belongs to the PDCD5 family.

The protein is DNA-binding protein Msp_0595 of Methanosphaera stadtmanae (strain ATCC 43021 / DSM 3091 / JCM 11832 / MCB-3).